The sequence spans 239 residues: Zinc finger protein 575 (239 aa).

A disordered region spans residues methionine 1 to cysteine 62. Positions proline 22–leucine 31 are enriched in basic and acidic residues. The segment covering arginine 46–histidine 57 has biased composition (basic residues). C2H2-type zinc fingers lie at residues histidine 57 to histidine 79, histidine 85 to histidine 107, histidine 113 to histidine 135, tyrosine 141 to histidine 163, tyrosine 171 to histidine 193, and histidine 207 to histidine 230.

This sequence belongs to the krueppel C2H2-type zinc-finger protein family.

It is found in the nucleus. In terms of biological role, may be involved in transcriptional regulation. This is Zinc finger protein 575 (Znf575) from Mus musculus (Mouse).